The primary structure comprises 519 residues: Cytochrome P450 4A22 (519 aa).

A propeptide spanning residues 1–4 is cleaved from the precursor; sequence MSVS. Residue E321 participates in heme binding. S440 is subject to Phosphoserine. Heme is bound at residue C457.

The protein belongs to the cytochrome P450 family.

It localises to the endoplasmic reticulum membrane. Its subcellular location is the microsome membrane. It carries out the reaction an omega-methyl-long-chain fatty acid + reduced [NADPH--hemoprotein reductase] + O2 = an omega-hydroxy-long-chain fatty acid + oxidized [NADPH--hemoprotein reductase] + H2O + H(+). Functionally, catalyzes the omega- and (omega-1)-hydroxylation of various fatty acids such as laurate and palmitate. Shows no activity towards arachidonic acid and prostaglandin A1. Lacks functional activity in the kidney and does not contribute to renal 20-hydroxyeicosatetraenoic acid (20-HETE) biosynthesis. This Homo sapiens (Human) protein is Cytochrome P450 4A22 (CYP4A22).